We begin with the raw amino-acid sequence, 156 residues long: Small ribosomal subunit protein uS7 (156 aa).

It belongs to the universal ribosomal protein uS7 family. As to quaternary structure, part of the 30S ribosomal subunit. Contacts proteins S9 and S11.

In terms of biological role, one of the primary rRNA binding proteins, it binds directly to 16S rRNA where it nucleates assembly of the head domain of the 30S subunit. Is located at the subunit interface close to the decoding center, probably blocks exit of the E-site tRNA. The sequence is that of Small ribosomal subunit protein uS7 from Nitrosomonas eutropha (strain DSM 101675 / C91 / Nm57).